The chain runs to 897 residues: Isoleucine--tRNA ligase (897 aa).

The 'HIGH' region signature appears at 59-69; sequence PYANGDIHVGH. Residue Glu-553 coordinates L-isoleucyl-5'-AMP. The 'KMSKS' region signature appears at 594-598; it reads KMSKS. Residue Lys-597 participates in ATP binding. Positions 866, 869, 883, and 886 each coordinate Zn(2+).

Belongs to the class-I aminoacyl-tRNA synthetase family. IleS type 1 subfamily. Monomer. Zn(2+) is required as a cofactor.

It localises to the cytoplasm. It carries out the reaction tRNA(Ile) + L-isoleucine + ATP = L-isoleucyl-tRNA(Ile) + AMP + diphosphate. In terms of biological role, catalyzes the attachment of isoleucine to tRNA(Ile). As IleRS can inadvertently accommodate and process structurally similar amino acids such as valine, to avoid such errors it has two additional distinct tRNA(Ile)-dependent editing activities. One activity is designated as 'pretransfer' editing and involves the hydrolysis of activated Val-AMP. The other activity is designated 'posttransfer' editing and involves deacylation of mischarged Val-tRNA(Ile). In Mycoplasmopsis synoviae (strain 53) (Mycoplasma synoviae), this protein is Isoleucine--tRNA ligase.